The primary structure comprises 187 residues: MNKRRVKMRKEIRLSGFGGQGIILAGVILGRAAALYDNKEAVQTQSYGPEARGGASKSEVVISDEPIDFPKVIKPDILVCLSQQAYDKYKDDIKEGGVVLVDEDLVSTDKMPEVDVTMYKIPFTRIASEEIKLPIVANIVMLGALTRLTNIVSKESMEKAILDSVPKGTEEKNLLAFSKGYEVAKEL.

In terms of assembly, heterotetramer of the KorA, KorB, KorC and KorD subunits.

The catalysed reaction is 2 oxidized [2Fe-2S]-[ferredoxin] + 2-oxoglutarate + CoA = succinyl-CoA + 2 reduced [2Fe-2S]-[ferredoxin] + CO2 + H(+). This chain is 2-oxoglutarate synthase subunit KorC (korC), found in Methanocaldococcus jannaschii (strain ATCC 43067 / DSM 2661 / JAL-1 / JCM 10045 / NBRC 100440) (Methanococcus jannaschii).